The sequence spans 431 residues: Glutamate--tRNA ligase 1 (431 aa).

The 'HIGH' region signature appears at 6 to 16 (PSPTGDMHIGN). The 'KMSKS' region motif lies at 235–239 (KMSKR). An ATP-binding site is contributed by lysine 238.

This sequence belongs to the class-I aminoacyl-tRNA synthetase family. Glutamate--tRNA ligase type 1 subfamily. Monomer.

Its subcellular location is the cytoplasm. It catalyses the reaction tRNA(Glu) + L-glutamate + ATP = L-glutamyl-tRNA(Glu) + AMP + diphosphate. Catalyzes the attachment of glutamate to tRNA(Glu) in a two-step reaction: glutamate is first activated by ATP to form Glu-AMP and then transferred to the acceptor end of tRNA(Glu). The sequence is that of Glutamate--tRNA ligase 1 from Campylobacter curvus (strain 525.92).